The sequence spans 647 residues: DNA mismatch repair protein MutL (647 aa).

This sequence belongs to the DNA mismatch repair MutL/HexB family.

Functionally, this protein is involved in the repair of mismatches in DNA. It is required for dam-dependent methyl-directed DNA mismatch repair. May act as a 'molecular matchmaker', a protein that promotes the formation of a stable complex between two or more DNA-binding proteins in an ATP-dependent manner without itself being part of a final effector complex. The chain is DNA mismatch repair protein MutL from Koribacter versatilis (strain Ellin345).